The following is a 151-amino-acid chain: Cytochrome c-type biogenesis protein CcmE (151 aa).

The Cytoplasmic segment spans residues 1 to 8 (MNPLRRKR). The helical; Signal-anchor for type II membrane protein transmembrane segment at 9–29 (LLIILAILVGVGVAVGLALSA) threads the bilayer. Over 30 to 151 (LQQNINLFYT…QSAPTPAKEG (122 aa)) the chain is Periplasmic. Residues H124 and Y128 each contribute to the heme site.

The protein belongs to the CcmE/CycJ family.

The protein resides in the cell inner membrane. Its function is as follows. Heme chaperone required for the biogenesis of c-type cytochromes. Transiently binds heme delivered by CcmC and transfers the heme to apo-cytochromes in a process facilitated by CcmF and CcmH. This Pseudomonas fluorescens biotype C protein is Cytochrome c-type biogenesis protein CcmE.